The sequence spans 620 residues: Chaperone protein HscA homolog (620 aa).

Belongs to the heat shock protein 70 family.

Its function is as follows. Chaperone involved in the maturation of iron-sulfur cluster-containing proteins. Has a low intrinsic ATPase activity which is markedly stimulated by HscB. The chain is Chaperone protein HscA homolog from Pseudomonas syringae pv. syringae (strain B728a).